A 325-amino-acid chain; its full sequence is Beta-ketoacyl-[acyl-carrier-protein] synthase III (325 aa).

Active-site residues include C119 and H252. Residues 253-257 (QANLR) form an ACP-binding region. N282 is a catalytic residue.

This sequence belongs to the thiolase-like superfamily. FabH family. In terms of assembly, homodimer.

The protein localises to the cytoplasm. The catalysed reaction is malonyl-[ACP] + acetyl-CoA + H(+) = 3-oxobutanoyl-[ACP] + CO2 + CoA. It participates in lipid metabolism; fatty acid biosynthesis. In terms of biological role, catalyzes the condensation reaction of fatty acid synthesis by the addition to an acyl acceptor of two carbons from malonyl-ACP. Catalyzes the first condensation reaction which initiates fatty acid synthesis and may therefore play a role in governing the total rate of fatty acid production. Possesses both acetoacetyl-ACP synthase and acetyl transacylase activities. Its substrate specificity determines the biosynthesis of branched-chain and/or straight-chain of fatty acids. The chain is Beta-ketoacyl-[acyl-carrier-protein] synthase III from Polaromonas naphthalenivorans (strain CJ2).